The primary structure comprises 285 residues: Coagulation factor IX (285 aa).

Y23 is modified (sulfotyrosine). N-linked (GlcNAc...) asparagine glycosylation is present at N25. Phosphothreonine; alternate is present on T27. A glycan (O-linked (GalNAc...) threonine; alternate) is linked at T27. An N-linked (GlcNAc...) asparagine glycan is attached at N45. T47 carries O-linked (GalNAc...) threonine glycosylation. In terms of domain architecture, Peptidase S1 spans 59 to 285; it reads VVGGEDAKPG…YTKVSRYVNW (227 aa). Cysteines 84 and 100 form a disulfide. H99 functions as the Charge relay system in the catalytic mechanism. 3 residues coordinate Ca(2+): N115, E120, and E123. N-linked (GlcNAc...) asparagine glycans are attached at residues N127 and N138. The Charge relay system role is filled by D147. Disulfide bonds link C214–C228 and C239–C267. S243 (charge relay system) is an active-site residue.

It belongs to the peptidase S1 family. As to quaternary structure, heterodimer of a light chain and a heavy chain; disulfide-linked. Interacts (inactive and activated) with F11 (activated) in calcium-dependent manner. Interacts with SERPINC1. Activated by factor XIa, which excises the activation peptide. The propeptide can also be removed by snake venom protease. Activated by coagulation factor VIIa-tissue factor (F7-F3) complex in calcium-dependent manner.

Its subcellular location is the secreted. It carries out the reaction Selective cleavage of Arg-|-Ile bond in factor X to form factor Xa.. In terms of biological role, factor IX is a vitamin K-dependent plasma protein that participates in the intrinsic pathway of blood coagulation by converting factor X to its active form in the presence of Ca(2+) ions, phospholipids, and factor VIIIa. In Cavia porcellus (Guinea pig), this protein is Coagulation factor IX (F9).